Reading from the N-terminus, the 74-residue chain is Cecropin-P3 (74 aa).

A signal peptide spans 1–13 (MFLIYLLVQTAES). The propeptide at 45-74 (RRRSVGEEDAIPSHIEVNKFFLRKPAKEHI) is removed in mature form.

This sequence belongs to the cecropin family. As to expression, expressed in the body wall, intestine, uterus and ovary.

The protein resides in the secreted. Its function is as follows. Has antibacterial activity against several Gram-positive and Gram-negative bacteria. Is weakly active against yeasts. Acts by a nonpore mechanism. This is Cecropin-P3 (ASCEC-3) from Ascaris suum (Pig roundworm).